The chain runs to 227 residues: Phosphoribosylformylglycinamidine synthase subunit PurQ (227 aa).

Residues 3–225 enclose the Glutamine amidotransferase type-1 domain; the sequence is FAVIVFPGSN…LRNWRESHVV (223 aa). The Nucleophile role is filled by C86. Active-site residues include H194 and E196.

In terms of assembly, part of the FGAM synthase complex composed of 1 PurL, 1 PurQ and 2 PurS subunits.

It is found in the cytoplasm. The catalysed reaction is N(2)-formyl-N(1)-(5-phospho-beta-D-ribosyl)glycinamide + L-glutamine + ATP + H2O = 2-formamido-N(1)-(5-O-phospho-beta-D-ribosyl)acetamidine + L-glutamate + ADP + phosphate + H(+). It carries out the reaction L-glutamine + H2O = L-glutamate + NH4(+). It participates in purine metabolism; IMP biosynthesis via de novo pathway; 5-amino-1-(5-phospho-D-ribosyl)imidazole from N(2)-formyl-N(1)-(5-phospho-D-ribosyl)glycinamide: step 1/2. Its function is as follows. Part of the phosphoribosylformylglycinamidine synthase complex involved in the purines biosynthetic pathway. Catalyzes the ATP-dependent conversion of formylglycinamide ribonucleotide (FGAR) and glutamine to yield formylglycinamidine ribonucleotide (FGAM) and glutamate. The FGAM synthase complex is composed of three subunits. PurQ produces an ammonia molecule by converting glutamine to glutamate. PurL transfers the ammonia molecule to FGAR to form FGAM in an ATP-dependent manner. PurS interacts with PurQ and PurL and is thought to assist in the transfer of the ammonia molecule from PurQ to PurL. The chain is Phosphoribosylformylglycinamidine synthase subunit PurQ from Halalkalibacterium halodurans (strain ATCC BAA-125 / DSM 18197 / FERM 7344 / JCM 9153 / C-125) (Bacillus halodurans).